A 1515-amino-acid polypeptide reads, in one-letter code: Homeobox protein cut-like 1 (1515 aa).

Residues 56–361 (LLKSFQGEID…VKKELNTLKS (306 aa)) are a coiled coil. A compositionally biased stretch (polar residues) spans 393–405 (ENATLRISNSDLS). Disordered stretches follow at residues 393–453 (ENAT…SPAG), 509–546 (PYST…ISEG), 644–666 (PKRR…TGSD), and 680–702 (LQVQ…NSDD). Residues 422–432 (GPLPASPPPQL) show a composition bias toward pro residues. Position 427 is a phosphoserine (Ser427). Polar residues predominate over residues 436 to 447 (TGEQVSNTNGTH). Residues 514-544 (SISSPSPLQQSPDVNGMAPSPSQSESAGSIS) show a composition bias toward low complexity. Residues 540-627 (AGSISEGEEI…ILALRSIQGR (88 aa)) constitute a DNA-binding region (CUT 1). The residue at position 761 (Ser761) is a Phosphoserine. Disordered regions lie at residues 769 to 871 (PETS…SASA) and 884 to 923 (YSQS…PSVP). Residues Lys783, Lys809, and Lys840 each participate in a glycyl lysine isopeptide (Lys-Gly) (interchain with G-Cter in SUMO2) cross-link. Residues 828 to 852 (PERRNLTSSEETKADETTASGKERA) show a composition bias toward basic and acidic residues. Composition is skewed to polar residues over residues 853 to 868 (GSSQ…QGPS) and 884 to 906 (YSQS…NSPL). Position 904 is a phosphoserine (Ser904). Positions 929–1016 (QYEVYMYQEV…QGVLPVQGQQ (88 aa)) form a DNA-binding region, CUT 2. The span at 1032 to 1044 (QQGCVSSESTPKT) shows a compositional bias: polar residues. Residues 1032–1105 (QQGCVSSEST…QPTTPLPLSG (74 aa)) are disordered. Positions 1045–1061 (SASCSPAPESPMSSSES) are enriched in low complexity. Phosphoserine occurs at positions 1054 and 1064. The segment at residues 1112-1199 (QELVAMSPEL…VEKLMDMKRM (88 aa)) is a DNA-binding region (CUT 3). Residues 1207-1242 (RRHSSVSDSQPCEPPSVGIDYSQGASPQPQHQLKKP) form a disordered region. A DNA-binding region (homeobox) is located at residues 1239 to 1298 (LKKPRVVLAPEEKEALKRAYQQKPYPSPKTIEELATQLNLKTSTVINWFHNYRSRIRREL). A Phosphoserine modification is found at Ser1265. Residue Lys1279 forms a Glycyl lysine isopeptide (Lys-Gly) (interchain with G-Cter in SUMO2) linkage. Residues 1307 to 1488 (SQGQAGASDS…AGARDNPVRK (182 aa)) form a disordered region. Residues 1313 to 1328 (ASDSPSARSSRAAPSS) show a composition bias toward low complexity. Over residues 1331 to 1343 (DSCDGVEATDAEE) the composition is skewed to acidic residues. The residue at position 1332 (Ser1332) is a Phosphoserine. Over residues 1365-1378 (ADREEATQPAEKAK) the composition is skewed to basic and acidic residues. Positions 1406 to 1468 (ADAPAPVPSL…ANAPARRPSS (63 aa)) are enriched in low complexity. Phosphoserine is present on residues Ser1468, Ser1496, and Ser1506.

It belongs to the CUT homeobox family. As to quaternary structure, interacts with BANP. Interacts with SATB1 (via DNA-binding domains); the interaction inhibits the attachment of both proteins to DNA. Post-translationally, phosphorylated by PKA. In terms of processing, as cells progress into S phase, a fraction of CUX1 molecules is proteolytically processed into N-terminally truncated proteins of 110 kDa by CTSL. Cell cycle-dependent processing of CUX1 serves to generate a CDP/Cux p110 with distinct DNA binding and transcriptional properties. Testis-specific where it is expressed in germ cells.

Its subcellular location is the nucleus. Transcription factor involved in the control of neuronal differentiation in the brain. Regulates dendrite development and branching, and dendritic spine formation in cortical layers II-III. Also involved in the control of synaptogenesis. In addition, it has probably a broad role in mammalian development as a repressor of developmentally regulated gene expression. May act by preventing binding of positively-activing CCAAT factors to promoters. Component of nf-munr repressor; binds to the matrix attachment regions (MARs) (5' and 3') of the immunoglobulin heavy chain enhancer. Represses T-cell receptor (TCR) beta enhancer function by binding to MARbeta, an ATC-rich DNA sequence located upstream of the TCR beta enhancer. Binds to the TH enhancer; may require the basic helix-loop-helix protein TCF4 as a coactivator. Its function is as follows. Plays a role in cell cycle progression, in particular at the G1/S transition. As cells progress into S phase, a fraction of CUX1 molecules is proteolytically processed into N-terminally truncated proteins of 110 kDa. While CUX1 only transiently binds to DNA and carries the CCAAT-displacement activity, CDP/Cux p110 makes a stable interaction with DNA and stimulates expression of genes such as POLA1. This is Homeobox protein cut-like 1 from Mus musculus (Mouse).